The chain runs to 72 residues: Translation initiation factor IF-1 1 (72 aa).

An S1-like domain is found at 1–72 (MSKEDVIQMQ…TKGRIVFRAK (72 aa)).

This sequence belongs to the IF-1 family. Component of the 30S ribosomal translation pre-initiation complex which assembles on the 30S ribosome in the order IF-2 and IF-3, IF-1 and N-formylmethionyl-tRNA(fMet); mRNA recruitment can occur at any time during PIC assembly.

Its subcellular location is the cytoplasm. Its function is as follows. One of the essential components for the initiation of protein synthesis. Stabilizes the binding of IF-2 and IF-3 on the 30S subunit to which N-formylmethionyl-tRNA(fMet) subsequently binds. Helps modulate mRNA selection, yielding the 30S pre-initiation complex (PIC). Upon addition of the 50S ribosomal subunit IF-1, IF-2 and IF-3 are released leaving the mature 70S translation initiation complex. This Thiobacillus denitrificans (strain ATCC 25259 / T1) protein is Translation initiation factor IF-1 1.